The following is a 315-amino-acid chain: Homoserine kinase (315 aa).

97–107 is an ATP binding site; sequence PPARGLGSSAT.

This sequence belongs to the GHMP kinase family. Homoserine kinase subfamily.

The protein resides in the cytoplasm. It carries out the reaction L-homoserine + ATP = O-phospho-L-homoserine + ADP + H(+). The protein operates within amino-acid biosynthesis; L-threonine biosynthesis; L-threonine from L-aspartate: step 4/5. Catalyzes the ATP-dependent phosphorylation of L-homoserine to L-homoserine phosphate. This Synechococcus sp. (strain CC9605) protein is Homoserine kinase.